The sequence spans 32 residues: Delta-conotoxin-like CnVID (32 aa).

3 disulfides stabilise this stretch: cysteine 3/cysteine 18, cysteine 10/cysteine 22, and cysteine 17/cysteine 27. Residues proline 6 and proline 14 each carry the 4-hydroxyproline modification.

The protein belongs to the conotoxin O1 superfamily. In terms of tissue distribution, expressed by the venom duct.

Its subcellular location is the secreted. Its function is as follows. Delta-conotoxins bind to site 6 of voltage-gated sodium channels (Nav) and inhibit the inactivation process. This toxin acts on Nav1.2/SCN2A, Nav1.3/SCN3A and Nav1.6/SCN8A (EC(50)=1.7 uM). This is Delta-conotoxin-like CnVID from Conus consors (Singed cone).